Reading from the N-terminus, the 432-residue chain is Proline--tRNA ligase (432 aa).

It belongs to the class-II aminoacyl-tRNA synthetase family. ProS type 2 subfamily. Homodimer.

The protein resides in the cytoplasm. The catalysed reaction is tRNA(Pro) + L-proline + ATP = L-prolyl-tRNA(Pro) + AMP + diphosphate. Its function is as follows. Catalyzes the attachment of proline to tRNA(Pro) in a two-step reaction: proline is first activated by ATP to form Pro-AMP and then transferred to the acceptor end of tRNA(Pro). In Rickettsia prowazekii (strain Madrid E), this protein is Proline--tRNA ligase.